Here is a 648-residue protein sequence, read N- to C-terminus: DNA ligase (648 aa).

NAD(+) contacts are provided by residues 63 to 67 (DILYD) and 105 to 106 (ST). The active-site N6-AMP-lysine intermediate is Lys143. Arg159, Glu190, and Lys302 together coordinate NAD(+). Cys390, Cys393, Cys406, and Cys412 together coordinate Zn(2+). The 79-residue stretch at 570–648 (SLASPLTGKI…SEQEYLDLIS (79 aa)) folds into the BRCT domain.

Belongs to the NAD-dependent DNA ligase family. LigA subfamily. Mg(2+) serves as cofactor. Requires Mn(2+) as cofactor.

The catalysed reaction is NAD(+) + (deoxyribonucleotide)n-3'-hydroxyl + 5'-phospho-(deoxyribonucleotide)m = (deoxyribonucleotide)n+m + AMP + beta-nicotinamide D-nucleotide.. In terms of biological role, DNA ligase that catalyzes the formation of phosphodiester linkages between 5'-phosphoryl and 3'-hydroxyl groups in double-stranded DNA using NAD as a coenzyme and as the energy source for the reaction. It is essential for DNA replication and repair of damaged DNA. The protein is DNA ligase of Shewanella baltica (strain OS155 / ATCC BAA-1091).